Consider the following 222-residue polypeptide: Coiled-coil domain-containing protein 43 homolog (222 aa).

Residues 80-111 (ETENKLKLTNLKLEQELKIKETTQSEINEEEK) adopt a coiled-coil conformation. 2 disordered regions span residues 102 to 126 (TQSE…EQKK) and 159 to 222 (EDNK…KRRL). Basic and acidic residues-rich tracts occupy residues 112–126 (YENP…EQKK) and 175–212 (RIAD…EEKK). Residues 168–222 (GENLNAKRIADEEKAKREKSKIEHQKKVQRDKEALEKQKRDEEKKKTVKKEKRRL) are a coiled coil. The span at 213–222 (KTVKKEKRRL) shows a compositional bias: basic residues.

It belongs to the CCDC43 family.

In Dictyostelium discoideum (Social amoeba), this protein is Coiled-coil domain-containing protein 43 homolog.